Here is a 149-residue protein sequence, read N- to C-terminus: Large ribosomal subunit protein bL20m (149 aa).

The N-terminal 9 residues, 1 to 9 (MVFLTAQLW), are a transit peptide targeting the mitochondrion.

It belongs to the bacterial ribosomal protein bL20 family. In terms of assembly, component of the mitochondrial large ribosomal subunit (mt-LSU). Mature mammalian 55S mitochondrial ribosomes consist of a small (28S) and a large (39S) subunit. The 28S small subunit contains a 12S ribosomal RNA (12S mt-rRNA) and 30 different proteins. The 39S large subunit contains a 16S rRNA (16S mt-rRNA), a copy of mitochondrial valine transfer RNA (mt-tRNA(Val)), which plays an integral structural role, and 52 different proteins. Interacts with OXA1L.

Its subcellular location is the mitochondrion. In Homo sapiens (Human), this protein is Large ribosomal subunit protein bL20m (MRPL20).